Here is a 212-residue protein sequence, read N- to C-terminus: Uridine kinase (212 aa).

13–20 (GASASGKS) provides a ligand contact to ATP.

This sequence belongs to the uridine kinase family.

The protein resides in the cytoplasm. It catalyses the reaction uridine + ATP = UMP + ADP + H(+). The enzyme catalyses cytidine + ATP = CMP + ADP + H(+). It participates in pyrimidine metabolism; CTP biosynthesis via salvage pathway; CTP from cytidine: step 1/3. It functions in the pathway pyrimidine metabolism; UMP biosynthesis via salvage pathway; UMP from uridine: step 1/1. In Shewanella oneidensis (strain ATCC 700550 / JCM 31522 / CIP 106686 / LMG 19005 / NCIMB 14063 / MR-1), this protein is Uridine kinase.